The chain runs to 544 residues: MYFSQNAIILVMLMFVISAVFYATIDYKTKEVEDEIKIKEVSLYEKNLINTIDRNIDKIVEDAFVNASYKIMKERKFFTASSEAVAYITSYIKNETKESLNNVNYGYSNISYNISSVKISPTYDPLVVHLYCEIDIKYSKKLNNGELIALKPIVINRDIKLSRIPDPYVYLNKFYYTWGYEKKINIYNFPNDNYNRTFCIILNSSNFNYSEMHNPQSPTELRVIGWDSVSNKIILLPYWVQTWREGNNDVSVIWVRANKNEIYNYNNGQGYIYILYNSTTPVDRQDPEHTFIFFDDFNYFNPDKWDSVGYFIINNSKITVIAGAGSSVYTKQTYGTRYELIFRANFTPSHAQTIGFFTQLSDNDGVGWDMYDWTGNNPELYMRVGYSGSDIGDYVPNSNKYLNKFYIYDLKRISTTDLNFTIFNDTLDIEYSNSFTNGNKGNNYPISITALINLNTNVTVDWIFLKDINDITTTVPPIGVDEYPNLDYKEEKPKTFTGTIYYGEPGKYILVYNSTYSIIGLYTNKTDYWLYPNMPGYKPLIEEN.

An N-terminal signal peptide occupies residues 1 to 22; it reads MYFSQNAIILVMLMFVISAVFY.

This is an uncharacterized protein from Methanocaldococcus jannaschii (strain ATCC 43067 / DSM 2661 / JAL-1 / JCM 10045 / NBRC 100440) (Methanococcus jannaschii).